The following is a 410-amino-acid chain: Scarecrow-like protein 32 (410 aa).

The 391-residue stretch at 18 to 408 (LRGCGDANFM…HSVVFATVWV (391 aa)) folds into the GRAS domain. The segment at 25-88 (NFMEQLLLHC…AVSKTPTLSS (64 aa)) is leucine repeat I (LRI). The interval 107–188 (LAAFVDLTPW…HFPPFINISY (82 aa)) is VHIID. A VHIID motif is present at residues 138–142 (VHIVD). Residues 190 to 227 (ELGSKLVNFATTRNITMEFTIVPSTYSDGFSSLLQQLR) form a leucine repeat II (LRII) region. The PFYRE stretch occupies residues 237–329 (LVVNCHMMLR…EAEISWKIEN (93 aa)). The segment at 332–408 (AKEGAERVER…HSVVFATVWV (77 aa)) is SAW.

The protein belongs to the GRAS family. In terms of tissue distribution, expressed in seedlings, leaves and flowers.

It is found in the nucleus. Probable transcription factor involved in plant development. This chain is Scarecrow-like protein 32 (SCL32), found in Arabidopsis thaliana (Mouse-ear cress).